Consider the following 219-residue polypeptide: Large ribosomal subunit protein uL3 (219 aa).

Disordered stretches follow at residues 62 to 81 (DSRS…KKAG) and 136 to 156 (QARG…SVGM).

This sequence belongs to the universal ribosomal protein uL3 family. As to quaternary structure, part of the 50S ribosomal subunit. Forms a cluster with proteins L14 and L19.

In terms of biological role, one of the primary rRNA binding proteins, it binds directly near the 3'-end of the 23S rRNA, where it nucleates assembly of the 50S subunit. This chain is Large ribosomal subunit protein uL3, found in Staphylococcus saprophyticus subsp. saprophyticus (strain ATCC 15305 / DSM 20229 / NCIMB 8711 / NCTC 7292 / S-41).